The following is an 816-amino-acid chain: Lon protease (816 aa).

The Lon N-terminal domain occupies 40 to 244 (VPLIAVPSHP…KVLELLYEEL (205 aa)). Residue 398 to 405 (GPPGVGKT) participates in ATP binding. Positions 636 to 816 (AMSPGMVMGL…SMKEVIKLLF (181 aa)) constitute a Lon proteolytic domain. Active-site residues include Ser-724 and Lys-767.

Belongs to the peptidase S16 family. In terms of assembly, homohexamer. Organized in a ring with a central cavity.

It localises to the cytoplasm. It carries out the reaction Hydrolysis of proteins in presence of ATP.. ATP-dependent serine protease that mediates the selective degradation of mutant and abnormal proteins as well as certain short-lived regulatory proteins. Required for cellular homeostasis and for survival from DNA damage and developmental changes induced by stress. Degrades polypeptides processively to yield small peptide fragments that are 5 to 10 amino acids long. Binds to DNA in a double-stranded, site-specific manner. This Borrelia duttonii (strain Ly) protein is Lon protease.